The chain runs to 728 residues: MDNPTDTAGKCPVAHGNKPRGPSNRDWWPNQLNVQILHHNSGRADPMGKDFDYAEEFKKLDLDALKKDLTALMTDSQDWWPADFGHYGGLFIRMAWHSAGTYRITDGRGGAGQGQQRFAPLNSWPDNANLDKARRLLWPIKQKYGNRISWADLLILTGNVALESMGFKTFGFAGGRADVWEPEELYWGPEGTWLGDERYSGERQLAEPLGAVQMGLIYVNPEGPGGNPDPLASARDIRETFARMAMNDEETVALIAGGHTFGKTHGAGDPSFIGAEPEGGAIEDQGLGWKSSFGSGVGKDAITAGLEVTWSQTPTKWSNYFFENLFAYEWELTKSPAGAHQWQAKNAEASIPDAYEAGKKHLPTMLTSDLALRFDPIYEKISRRFLENPDQFADAFARAWFKLTHRDMGPKVRYLGPEVPAEDLIWQDVIPAVDHPLVGDKDIAELKAKVLATGLSVQELVSTAWASASTFRGSDKRGGANGARIRLAPQKDWDANQPAQLAKVLGVLEGLQKDFNAAQTGGKKISLADMIVLAGAAGVEKAAAAGGTTVSVPFTPGRMDASEAQTDAHSFAALEPRIDGFRNYVNDKRLQFMKPEEALVDRAQLLTLTGPEMTVLVGGLRVLKAGQPEHGVFTARPETLTNDFFVNLLDMATQWVPAAGKDGVYEGRDRKTGAAKWTGTRVDLIFGSHSQLRAFAEVYGQADAKEKFVKDFVAAWNKVMNADRFDLV.

Positions 1–26 (MDNPTDTAGKCPVAHGNKPRGPSNRD) are disordered. Residues 96–218 (WHSAGTYRIT…LGAVQMGLIY (123 aa)) constitute a cross-link (tryptophyl-tyrosyl-methioninium (Trp-Tyr) (with M-244)). His-97 functions as the Proton acceptor in the catalytic mechanism. The segment at residues 218–244 (YVNPEGPGGNPDPLASARDIRETFARM) is a cross-link (tryptophyl-tyrosyl-methioninium (Tyr-Met) (with W-96)). His-259 contributes to the heme b binding site.

This sequence belongs to the peroxidase family. Peroxidase/catalase subfamily. Homodimer or homotetramer. It depends on heme b as a cofactor. In terms of processing, formation of the three residue Trp-Tyr-Met cross-link is important for the catalase, but not the peroxidase activity of the enzyme.

The catalysed reaction is H2O2 + AH2 = A + 2 H2O. It catalyses the reaction 2 H2O2 = O2 + 2 H2O. Its function is as follows. Bifunctional enzyme with both catalase and broad-spectrum peroxidase activity. This is Catalase-peroxidase from Rhizobium etli (strain CIAT 652).